Consider the following 706-residue polypeptide: mRNA (2'-O-methyladenosine-N(6)-)-methyltransferase (706 aa).

The segment at 1 to 34 (MANENHGSPREGASLLSHSPGTSSQSQPCSPKPV) is disordered. Residues 16–29 (LSHSPGTSSQSQPC) show a composition bias toward polar residues. S30 carries the phosphoserine modification. The 35-residue stretch at 43 to 77 (ELVHAGWEKCWSRRESRPYYFNRFTNQSLWEMPVL) folds into the WW domain. Residues 88–148 (GLNATPLPQD…QSVPSSPSIP (61 aa)) form a disordered region. Residues 109-113 (KSRKR) carry the Nuclear localization signal motif. S116 is subject to Phosphoserine. Positions 132–147 (IPVTPTSQSVPSSPSI) are enriched in low complexity. The residue at position 152 (T152) is a Phosphothreonine. Substrate-binding residues include R234 and R264. 552–555 (NPPF) contributes to the S-adenosyl-L-methionine binding site. Substrate-binding positions include E557 and 587 to 591 (WREPP). Residue 613 to 615 (FEH) participates in S-adenosyl-L-methionine binding. The segment at 663-706 (TAAYKQSGRSHGSSSSSSSSSSSSEAKDRDSGREQGPSREPHPT) is disordered. A Nuclear localization signal motif is present at residues 668–686 (QSGRSHGSSSSSSSSSSSS). The span at 675-686 (SSSSSSSSSSSS) shows a compositional bias: low complexity. Basic and acidic residues predominate over residues 687–706 (EAKDRDSGREQGPSREPHPT).

It belongs to the CAPAM family. As to quaternary structure, interacts with POLR2A; interacts with the phosphorylated C-terminal domain (CTD) of POLR2A.

The protein localises to the nucleus. It catalyses the reaction a 5'-end (N(7)-methyl 5'-triphosphoguanosine)-(2'-O-methyladenosine) in mRNA + S-adenosyl-L-methionine = a 5'-end (N(7)-methyl 5'-triphosphoguanosine)-(N(6),2'-O-dimethyladenosine) in mRNA + S-adenosyl-L-homocysteine + H(+). Its activity is regulated as follows. Cap-specific adenosine methyltransferase activity is inhibited by zinc. In terms of biological role, cap-specific adenosine methyltransferase that catalyzes formation of N(6),2'-O-dimethyladenosine cap (m6A(m)) by methylating the adenosine at the second transcribed position of capped mRNAs. Recruited to the early elongation complex of RNA polymerase II (RNAPII) via interaction with POLR2A and mediates formation of m6A(m) co-transcriptionally. The protein is mRNA (2'-O-methyladenosine-N(6)-)-methyltransferase of Mus musculus (Mouse).